A 78-amino-acid chain; its full sequence is Small ribosomal subunit protein bS18 (78 aa).

The protein belongs to the bacterial ribosomal protein bS18 family. In terms of assembly, part of the 30S ribosomal subunit. Forms a tight heterodimer with protein bS6.

Functionally, binds as a heterodimer with protein bS6 to the central domain of the 16S rRNA, where it helps stabilize the platform of the 30S subunit. In Limosilactobacillus fermentum (strain NBRC 3956 / LMG 18251) (Lactobacillus fermentum), this protein is Small ribosomal subunit protein bS18.